The sequence spans 546 residues: DDB1- and CUL4-associated factor 11 (546 aa).

The span at Met1–Gly19 shows a compositional bias: low complexity. Residues Met1–Val40 form a disordered region. Ser75 bears the Phosphoserine mark. WD repeat units follow at residues Ser170–Lys210, Asp216–Asp258, Glu263–Gln302, Ser305–Pro345, Gly353–Gly392, Gly435–Thr480, and Asn481–Asp520. Residues Pro523 to Gln546 form a disordered region. Over residues Arg537–Gln546 the composition is skewed to polar residues.

In terms of assembly, interacts with DDB1 and CUL4A.

Its pathway is protein modification; protein ubiquitination. May function as a substrate receptor for CUL4-DDB1 E3 ubiquitin-protein ligase complex. The polypeptide is DDB1- and CUL4-associated factor 11 (DCAF11) (Pongo abelii (Sumatran orangutan)).